A 507-amino-acid polypeptide reads, in one-letter code: ATP synthase subunit alpha, chloroplastic (507 aa).

170 to 177 contributes to the ATP binding site; that stretch reads GDRQTGKT.

This sequence belongs to the ATPase alpha/beta chains family. F-type ATPases have 2 components, CF(1) - the catalytic core - and CF(0) - the membrane proton channel. CF(1) has five subunits: alpha(3), beta(3), gamma(1), delta(1), epsilon(1). CF(0) has four main subunits: a, b, b' and c.

It localises to the plastid. Its subcellular location is the chloroplast thylakoid membrane. The catalysed reaction is ATP + H2O + 4 H(+)(in) = ADP + phosphate + 5 H(+)(out). Its function is as follows. Produces ATP from ADP in the presence of a proton gradient across the membrane. The alpha chain is a regulatory subunit. The sequence is that of ATP synthase subunit alpha, chloroplastic from Daucus carota (Wild carrot).